Here is a 681-residue protein sequence, read N- to C-terminus: Nucleolar GTP-binding protein 1 (681 aa).

In terms of domain architecture, OBG-type G spans arginine 170–leucine 341. Residues glycine 176 to serine 183, aspartate 222 to isoleucine 226, and asparagine 290 to aspartate 293 contribute to the GTP site.

The protein belongs to the TRAFAC class OBG-HflX-like GTPase superfamily. OBG GTPase family. NOG subfamily. In terms of tissue distribution, ubiquitously expressed.

It localises to the nucleus. The protein resides in the nucleolus. Functionally, involved in the biogenesis of the 60S ribosomal subunit. Has a role in regulating longevity, growth and brood size. May regulate fat storage via the insulin/IGF pathway. In Caenorhabditis elegans, this protein is Nucleolar GTP-binding protein 1.